Here is a 128-residue protein sequence, read N- to C-terminus: Aspartate 1-decarboxylase (128 aa).

Ser-25 functions as the Schiff-base intermediate with substrate; via pyruvic acid in the catalytic mechanism. Pyruvic acid (Ser) is present on Ser-25. A substrate-binding site is contributed by Thr-57. Tyr-58 serves as the catalytic Proton donor. 73–75 contacts substrate; the sequence is GAA.

Belongs to the PanD family. As to quaternary structure, heterooctamer of four alpha and four beta subunits. Pyruvate serves as cofactor. In terms of processing, is synthesized initially as an inactive proenzyme, which is activated by self-cleavage at a specific serine bond to produce a beta-subunit with a hydroxyl group at its C-terminus and an alpha-subunit with a pyruvoyl group at its N-terminus.

The protein resides in the cytoplasm. It catalyses the reaction L-aspartate + H(+) = beta-alanine + CO2. It functions in the pathway cofactor biosynthesis; (R)-pantothenate biosynthesis; beta-alanine from L-aspartate: step 1/1. Functionally, catalyzes the pyruvoyl-dependent decarboxylation of aspartate to produce beta-alanine. This is Aspartate 1-decarboxylase from Staphylococcus epidermidis (strain ATCC 35984 / DSM 28319 / BCRC 17069 / CCUG 31568 / BM 3577 / RP62A).